A 99-amino-acid chain; its full sequence is Integration host factor subunit alpha (99 aa).

The protein belongs to the bacterial histone-like protein family. As to quaternary structure, heterodimer of an alpha and a beta chain.

Its function is as follows. This protein is one of the two subunits of integration host factor, a specific DNA-binding protein that functions in genetic recombination as well as in transcriptional and translational control. The polypeptide is Integration host factor subunit alpha (Anaeromyxobacter sp. (strain Fw109-5)).